An 89-amino-acid polypeptide reads, in one-letter code: Large ribosomal subunit protein bL27 (89 aa).

Positions Met-1–Arg-20 are disordered.

This sequence belongs to the bacterial ribosomal protein bL27 family.

This Rhizorhabdus wittichii (strain DSM 6014 / CCUG 31198 / JCM 15750 / NBRC 105917 / EY 4224 / RW1) (Sphingomonas wittichii) protein is Large ribosomal subunit protein bL27.